We begin with the raw amino-acid sequence, 344 residues long: Fructose-1,6-bisphosphatase class 1 (344 aa).

The Mg(2+) site is built by Glu-91, Asp-110, Leu-112, and Asp-113. Substrate-binding positions include 113 to 116 and Asn-200; that span reads DGSS. Position 272 (Glu-272) interacts with Mg(2+).

Belongs to the FBPase class 1 family. As to quaternary structure, homotetramer. Mg(2+) is required as a cofactor.

It localises to the cytoplasm. It carries out the reaction beta-D-fructose 1,6-bisphosphate + H2O = beta-D-fructose 6-phosphate + phosphate. It functions in the pathway carbohydrate biosynthesis; Calvin cycle. This Rhodopseudomonas palustris (strain BisB18) protein is Fructose-1,6-bisphosphatase class 1.